Reading from the N-terminus, the 389-residue chain is Nucleic acid dioxygenase ALKBH1 (389 aa).

Positions 1-127 (MGKMAAAVAS…CLKLYSQKPN (127 aa)) are interaction with DNAJB6. The segment at 86 to 389 (SKWRAYGLEG…VKRKRLNPNS (304 aa)) is tRNA-binding. Substrate-binding positions include Trp-144 and 175 to 177 (YHY). Residues 213-347 (QAEAGILNYY…RVNMTVRQVL (135 aa)) enclose the Fe2OG dioxygenase domain. A 2-oxoglutarate-binding site is contributed by 220–222 (NYY). Residues His-231, Asp-233, and His-287 each coordinate Fe cation. Asp-233 is a binding site for substrate. 338 to 344 (RVNMTVR) provides a ligand contact to 2-oxoglutarate.

In terms of assembly, monomer. Interacts with DNAJB6. Fe(2+) serves as cofactor. In adult organs, highly expressed in testis, eye, brain and kidney.

The protein resides in the nucleus. It catalyses the reaction an N(6)-methyl-2'-deoxyadenosine in DNA + 2-oxoglutarate + O2 = a 2'-deoxyadenosine in DNA + formaldehyde + succinate + CO2. The enzyme catalyses 2'-deoxyribonucleotide-(2'-deoxyribose 5'-phosphate)-2'-deoxyribonucleotide-DNA = a 3'-end 2'-deoxyribonucleotide-(2,3-dehydro-2,3-deoxyribose 5'-phosphate)-DNA + a 5'-end 5'-phospho-2'-deoxyribonucleoside-DNA + H(+). The catalysed reaction is a methylated nucleobase within DNA + 2-oxoglutarate + O2 = a nucleobase within DNA + formaldehyde + succinate + CO2. It carries out the reaction an N(1)-methyladenosine in tRNA + 2-oxoglutarate + O2 = an adenosine in tRNA + formaldehyde + succinate + CO2. It catalyses the reaction 5-methylcytidine(34) in mitochondrial tRNA(Met) + 2 2-oxoglutarate + 2 O2 = 5-formylcytidine(34) in mitochondrial tRNA(Met) + 2 succinate + 2 CO2 + H2O. The enzyme catalyses an N(3)-methylcytidine in mRNA + 2-oxoglutarate + O2 = a cytidine in mRNA + formaldehyde + succinate + CO2. The catalysed reaction is N(1)-methyladenosine(58) in tRNA + 2-oxoglutarate + O2 = adenosine(58) in tRNA + formaldehyde + succinate + CO2. Its function is as follows. Dioxygenase that acts on nucleic acids, such as DNA and tRNA. Requires molecular oxygen, alpha-ketoglutarate and iron. A number of activities have been described for this dioxygenase, but recent results suggest that it mainly acts on tRNAs and mediates their demethylation or oxidation depending on the context and subcellular compartment. Mainly acts as a tRNA demethylase by removing N(1)-methyladenine from various tRNAs, with a preference for N(1)-methyladenine at position 58 (m1A58) present on a stem loop structure of tRNAs. Acts as a regulator of translation initiation and elongation in response to glucose deprivation: regulates both translation initiation, by mediating demethylation of tRNA(Met), and translation elongation, N(1)-methyladenine-containing tRNAs being preferentially recruited to polysomes to promote translation elongation. In mitochondrion, specifically interacts with mt-tRNA(Met) and mediates oxidation of mt-tRNA(Met) methylated at cytosine(34) to form 5-formylcytosine (f(5)c) at this position. mt-tRNA(Met) containing the f(5)c modification at the wobble position enables recognition of the AUA codon in addition to the AUG codon, expanding codon recognition in mitochondrial translation. Specifically demethylates DNA methylated on the 6th position of adenine (N(6)-methyladenosine) DNA. N(6)-methyladenosine (m6A) DNA is present at some L1 elements in embryonic stem cells and probably promotes their silencing. Demethylates mRNAs containing N(3)-methylcytidine modification. Also able to repair alkylated single-stranded DNA by oxidative demethylation, but with low activity. Also has DNA lyase activity and introduces double-stranded breaks at abasic sites: cleaves both single-stranded DNA and double-stranded DNA at abasic sites, with the greatest activity towards double-stranded DNA with two abasic sites. DNA lyase activity does not require alpha-ketoglutarate and iron and leads to the formation of an irreversible covalent protein-DNA adduct with the 5' DNA product. DNA lyase activity is not required during base excision repair and class switch recombination of the immunoglobulin heavy chain during B lymphocyte activation. May play a role in placental trophoblast lineage differentiation. In Mus musculus (Mouse), this protein is Nucleic acid dioxygenase ALKBH1.